Reading from the N-terminus, the 376-residue chain is Mitochondrial distribution and morphology protein 34 (376 aa).

The 194-residue stretch at 1 to 194 folds into the SMP-LTD domain; sequence MSFTFNWPRF…LPGIIHRLSQ (194 aa). Disordered stretches follow at residues 207-249 and 286-376; these read SKHP…PKIV and SVPP…LHPS. Acidic residues predominate over residues 218 to 230; that stretch reads EISEPGDYGEEGE. Residues 306–318 are compositionally biased toward basic residues; that stretch reads VKAKRKRTYRLGG. The segment covering 350–362 has biased composition (basic and acidic residues); that stretch reads MDRYFRSYDDHSR.

Belongs to the MDM34 family. Component of the ER-mitochondria encounter structure (ERMES) or MDM complex, composed of MMM1, MDM10, MDM12 and MDM34.

It is found in the mitochondrion outer membrane. Its function is as follows. Component of the ERMES/MDM complex, which serves as a molecular tether to connect the endoplasmic reticulum (ER) and mitochondria. Components of this complex are involved in the control of mitochondrial shape and protein biogenesis, and function in nonvesicular lipid trafficking between the ER and mitochondria. MDM34 is required for the interaction of the ER-resident membrane protein MMM1 and the outer mitochondrial membrane-resident beta-barrel protein MDM10. This Laccaria bicolor (strain S238N-H82 / ATCC MYA-4686) (Bicoloured deceiver) protein is Mitochondrial distribution and morphology protein 34.